The primary structure comprises 302 residues: Pyridoxal 5'-phosphate synthase subunit PdxS (302 aa).

Asp-32 is a D-ribose 5-phosphate binding site. Lys-89 serves as the catalytic Schiff-base intermediate with D-ribose 5-phosphate. Position 161 (Gly-161) interacts with D-ribose 5-phosphate. Residue Arg-173 coordinates D-glyceraldehyde 3-phosphate. Residues Gly-222 and Gly-243–Ser-244 each bind D-ribose 5-phosphate. Positions Ala-276–Asn-302 are disordered.

The protein belongs to the PdxS/SNZ family. In the presence of PdxT, forms a dodecamer of heterodimers.

It carries out the reaction aldehydo-D-ribose 5-phosphate + D-glyceraldehyde 3-phosphate + L-glutamine = pyridoxal 5'-phosphate + L-glutamate + phosphate + 3 H2O + H(+). Its pathway is cofactor biosynthesis; pyridoxal 5'-phosphate biosynthesis. Functionally, catalyzes the formation of pyridoxal 5'-phosphate from ribose 5-phosphate (RBP), glyceraldehyde 3-phosphate (G3P) and ammonia. The ammonia is provided by the PdxT subunit. Can also use ribulose 5-phosphate and dihydroxyacetone phosphate as substrates, resulting from enzyme-catalyzed isomerization of RBP and G3P, respectively. The protein is Pyridoxal 5'-phosphate synthase subunit PdxS of Halobacterium salinarum (strain ATCC 29341 / DSM 671 / R1).